Here is a 429-residue protein sequence, read N- to C-terminus: Probable M18 family aminopeptidase 2 (429 aa).

The Zn(2+) site is built by H82, H156, and H401.

This sequence belongs to the peptidase M18 family. Zn(2+) serves as cofactor.

This Ectopseudomonas mendocina (strain ymp) (Pseudomonas mendocina) protein is Probable M18 family aminopeptidase 2.